We begin with the raw amino-acid sequence, 505 residues long: ATP synthase subunit beta (505 aa).

157-164 provides a ligand contact to ATP; that stretch reads GGAGVGKT.

The protein belongs to the ATPase alpha/beta chains family. In terms of assembly, F-type ATPases have 2 components, CF(1) - the catalytic core - and CF(0) - the membrane proton channel. CF(1) has five subunits: alpha(3), beta(3), gamma(1), delta(1), epsilon(1). CF(0) has three main subunits: a(1), b(2) and c(9-12). The alpha and beta chains form an alternating ring which encloses part of the gamma chain. CF(1) is attached to CF(0) by a central stalk formed by the gamma and epsilon chains, while a peripheral stalk is formed by the delta and b chains.

Its subcellular location is the cell inner membrane. The catalysed reaction is ATP + H2O + 4 H(+)(in) = ADP + phosphate + 5 H(+)(out). In terms of biological role, produces ATP from ADP in the presence of a proton gradient across the membrane. The catalytic sites are hosted primarily by the beta subunits. In Bacteroides fragilis (strain ATCC 25285 / DSM 2151 / CCUG 4856 / JCM 11019 / LMG 10263 / NCTC 9343 / Onslow / VPI 2553 / EN-2), this protein is ATP synthase subunit beta.